Here is a 947-residue protein sequence, read N- to C-terminus: Protein translocase subunit SecA 1 (947 aa).

ATP contacts are provided by residues Gln83, 101–105 (GEGKT), and Asp490. Residues 860–947 (AKAQEQTGQG…KTSKPTRRRG (88 aa)) are disordered. Residues 925–934 (TRRERREAAR) show a composition bias toward basic and acidic residues. Basic residues predominate over residues 935 to 947 (KQAKTSKPTRRRG).

Belongs to the SecA family. Monomer and homodimer. Part of the essential Sec protein translocation apparatus which comprises SecA, SecYEG and auxiliary proteins SecDF. Other proteins may also be involved.

It localises to the cell membrane. It is found in the cytoplasm. The catalysed reaction is ATP + H2O + cellular proteinSide 1 = ADP + phosphate + cellular proteinSide 2.. Functionally, part of the Sec protein translocase complex. Interacts with the SecYEG preprotein conducting channel. Has a central role in coupling the hydrolysis of ATP to the transfer of proteins into and across the cell membrane, serving as an ATP-driven molecular motor driving the stepwise translocation of polypeptide chains across the membrane. This Mycobacterium sp. (strain JLS) protein is Protein translocase subunit SecA 1.